The following is a 543-amino-acid chain: Aspartate/alanine antiporter (543 aa).

10 helical membrane-spanning segments follow: residues 4-26, 33-55, 88-110, 117-139, 159-178, 362-381, 385-407, 428-450, 455-477, and 520-542; these read IGNF…GYLL, SFTL…LGVF, FGAK…AYAC, GPGI…GSSL, IPIV…LIFL, IINY…LGIV, VSGV…VQSI, SIGL…ISAI, ISVL…VICY, and VAPA…IVLL.

This sequence belongs to the AAE transporter (TC 2.A.81) family.

The protein resides in the cell membrane. Catalyzes the electrogenic exchange of aspartate with alanine. This chain is Aspartate/alanine antiporter (aspT), found in Tetragenococcus halophilus (Pediococcus halophilus).